Consider the following 385-residue polypeptide: Protein GOLM2 (385 aa).

The Cytoplasmic portion of the chain corresponds to 1–12 (MVGFGAPRRTGR). Residues 13-33 (LPPFVLVALLAVIGLLAFNYW) form a helical; Signal-anchor for type II membrane protein membrane-spanning segment. Topologically, residues 34-385 (SVSARQAALH…YHKDHLNETL (352 aa)) are lumenal. A coiled-coil region spans residues 44–193 (DELLGLQAQV…KEELDKQPQK (150 aa)). Residues 169–385 (LAERKREYEE…YHKDHLNETL (217 aa)) are disordered. Basic and acidic residues-rich tracts occupy residues 170 to 193 (AERK…QPQK) and 211 to 220 (EVKEKIEDPS). A compositionally biased stretch (polar residues) spans 265–283 (LPSQSKSLLEKQPSLQPLS). A compositionally biased stretch (basic and acidic residues) spans 285 to 299 (TEHEVKKPLPDKKET). Positions 356 to 367 (NGDDGNVEDDDH) are enriched in acidic residues. Basic and acidic residues predominate over residues 368–385 (DGQADAGEYHKDHLNETL).

The protein belongs to the GOLM family.

Its subcellular location is the membrane. This Xenopus laevis (African clawed frog) protein is Protein GOLM2 (golm2).